Reading from the N-terminus, the 227-residue chain is MLIKNKYKHSMFPVNQNNIIEENEEIKFDLIDTDIEIPFNYLTYILNSTSYITPEILFDGFKVVLPFYQDVQLKPLFELAFDQDVNINSQNKDNGCTFLHYSVEDVKVLYDNIPQFLLEKGADPNIQNKDGNTPLHILINRDFFSSKEIYVAKLLIQYGADIELKNLLGWTPIQCFIQAGNIKLKALLQLVKACKDNDFSKLDITTKDIKEFLDWQISITPENSKFF.

3 ANK repeats span residues N94–I126, D130–L164, and L168–F199.

The protein is Putative ankyrin repeat protein RF_0314 of Rickettsia felis (strain ATCC VR-1525 / URRWXCal2) (Rickettsia azadi).